Reading from the N-terminus, the 347-residue chain is Transcription factor EC (347 aa).

The necessary for transcriptional transactivation stretch occupies residues 1-119 (MTLDHQIINP…GLTSASCPSS (119 aa)). Residues 139–192 (QKKDNHNLIERRRRYNINYRIKELGTLIPKSNDPDMRWNKGTILKASVEYIKWL) enclose the bHLH domain. A necessary for transcriptional transactivation region spans residues 271 to 347 (PSPEFCDQAI…SFSSDDGDEL (77 aa)). Residues 319 to 347 (DPLLSATSPAVSKESSRRSSFSSDDGDEL) form a disordered region. Residues 326-341 (SPAVSKESSRRSSFSS) show a composition bias toward low complexity.

Belongs to the MiT/TFE family. In terms of assembly, homodimer. Forms heterodimers with MITF and TFE3. Interacts with MITF.

The protein localises to the nucleus. Transcriptional regulator that acts as a repressor or an activator. Acts as a transcriptional repressor on minimal promoter containing element F (that includes an E-box sequence). Binds to element F in an E-box sequence-specific manner. Acts as a transcriptional transactivator on the proximal promoter region of the tartrate-resistant acid phosphatase (TRAP) E-box containing promoter. Collaborates with MITF in target gene activation. Acts as a transcriptional repressor on minimal promoter containing mu E3 enhancer sequence. Binds to mu E3 DNA sequence of the immunoglobulin heavy-chain gene enhancer. Binds DNA in a homo- or heterodimeric form. This Pan troglodytes (Chimpanzee) protein is Transcription factor EC (TFEC).